A 1019-amino-acid polypeptide reads, in one-letter code: Photoactivated adenylate cyclase subunit alpha-like protein FB (1019 aa).

The BLUF 1 domain maps to 55–148 (LRRLMYLSAS…GRLYGEWHMK (94 aa)). Residues 204–332 (VVTFIYLVEF…DCINTASRIT (129 aa)) enclose the Guanylate cyclase 1 domain. One can recognise a BLUF 2 domain in the interval 467 to 559 (LITLTYISQA…REYGSPLDMT (93 aa)). The region spanning 615 to 744 (VLLATDICSF…EVSARVMEVV (130 aa)) is the Guanylate cyclase 2 domain. The segment covering 825–839 (APGRGAPAGGIPSSP) has biased composition (low complexity). Residues 825-862 (APGRGAPAGGIPSSPKVRPPGRTNSVSSYTPDPNEALD) are disordered. The span at 846-855 (RTNSVSSYTP) shows a compositional bias: polar residues.

This sequence belongs to the adenylyl cyclase class-4/guanylyl cyclase family. In terms of assembly, heterotetramer of two alpha and two beta subunits.

It localises to the cell projection. It is found in the cilium. Its subcellular location is the flagellum. The sequence is that of Photoactivated adenylate cyclase subunit alpha-like protein FB from Euglena gracilis.